Reading from the N-terminus, the 71-residue chain is Large ribosomal subunit protein uL29 (71 aa).

This sequence belongs to the universal ribosomal protein uL29 family. Part of the 50S ribosomal subunit. Interacts with protein L23.

In terms of biological role, stabilizes the tertiary rRNA structure within the 23S rRNA domain (domain I) to which it binds. Located at the polypeptide exit tunnel on the outside of the subunit. The sequence is that of Large ribosomal subunit protein uL29 (rpl29) from Haloarcula marismortui (strain ATCC 43049 / DSM 3752 / JCM 8966 / VKM B-1809) (Halobacterium marismortui).